The primary structure comprises 172 residues: Nucleoside-triphosphatase THEP1 (172 aa).

Residues 11–18 (GKPGIGKT) and 101–108 (IILIDEIG) contribute to the ATP site.

Belongs to the THEP1 NTPase family.

The catalysed reaction is a ribonucleoside 5'-triphosphate + H2O = a ribonucleoside 5'-diphosphate + phosphate + H(+). Its function is as follows. Has nucleotide phosphatase activity towards ATP, GTP, CTP, TTP and UTP. May hydrolyze nucleoside diphosphates with lower efficiency. This Sulfolobus acidocaldarius (strain ATCC 33909 / DSM 639 / JCM 8929 / NBRC 15157 / NCIMB 11770) protein is Nucleoside-triphosphatase THEP1.